We begin with the raw amino-acid sequence, 177 residues long: Large ribosomal subunit protein uL6 (177 aa).

The protein belongs to the universal ribosomal protein uL6 family. In terms of assembly, part of the 50S ribosomal subunit.

Functionally, this protein binds to the 23S rRNA, and is important in its secondary structure. It is located near the subunit interface in the base of the L7/L12 stalk, and near the tRNA binding site of the peptidyltransferase center. This is Large ribosomal subunit protein uL6 from Pseudomonas syringae pv. syringae (strain B728a).